The chain runs to 247 residues: Zinc finger protein YPR015C (247 aa).

2 C2H2-type zinc fingers span residues 185–207 (KQCP…YLIH) and 213–237 (FKCT…LRTH).

The protein is Zinc finger protein YPR015C of Saccharomyces cerevisiae (strain ATCC 204508 / S288c) (Baker's yeast).